A 274-amino-acid polypeptide reads, in one-letter code: MTQLTNFSESFSNQNSNLHQPYNFNSHQPPEENHYYVREPNGKRPFPVEFELDMEYVPRTKRRFDKISACLENFSISNDKPSPINICRESSSDEEMDEVYDDSNFDQCTESTSIPLVVEPDDEPAVAKKIRLDESIQRYFEKCRQGPIDFLPKPEKLKGNEMVIWQPRILVSPKNDFNMAGRIQEIDDEEEDRVNEEIKTRIIENEGMIDEDTRNETTGIVELGTGSDHSDIGSSWSSPMASPTGSSQIVELDPDSPNSLTNGSVTDEEMMEFE.

Over residues 1–17 (MTQLTNFSESFSNQNSN) the composition is skewed to low complexity. Disordered stretches follow at residues 1 to 38 (MTQLTNFSESFSNQNSNLHQPYNFNSHQPPEENHYYVR) and 222 to 274 (ELGT…MEFE). The segment covering 18-28 (LHQPYNFNSHQ) has biased composition (polar residues). The segment covering 29-38 (PPEENHYYVR) has biased composition (basic and acidic residues). Composition is skewed to polar residues over residues 239–249 (PMASPTGSSQI) and 256–265 (SPNSLTNGSV).

This is an uncharacterized protein from Caenorhabditis elegans.